Here is a 242-residue protein sequence, read N- to C-terminus: UDP-2,3-diacylglucosamine hydrolase (242 aa).

Positions 7, 9, 40, 78, and 113 each coordinate Mn(2+). 78–79 lines the substrate pocket; sequence NR. Residues Asp121, Ser159, Thr163, Lys166, and His194 each coordinate substrate. Mn(2+) is bound by residues His194 and His196.

Belongs to the LpxH family. The cofactor is Mn(2+).

It localises to the cell inner membrane. It carries out the reaction UDP-2-N,3-O-bis[(3R)-3-hydroxytetradecanoyl]-alpha-D-glucosamine + H2O = 2-N,3-O-bis[(3R)-3-hydroxytetradecanoyl]-alpha-D-glucosaminyl 1-phosphate + UMP + 2 H(+). It participates in glycolipid biosynthesis; lipid IV(A) biosynthesis; lipid IV(A) from (3R)-3-hydroxytetradecanoyl-[acyl-carrier-protein] and UDP-N-acetyl-alpha-D-glucosamine: step 4/6. Functionally, hydrolyzes the pyrophosphate bond of UDP-2,3-diacylglucosamine to yield 2,3-diacylglucosamine 1-phosphate (lipid X) and UMP by catalyzing the attack of water at the alpha-P atom. Involved in the biosynthesis of lipid A, a phosphorylated glycolipid that anchors the lipopolysaccharide to the outer membrane of the cell. The polypeptide is UDP-2,3-diacylglucosamine hydrolase (Ectopseudomonas mendocina (strain ymp) (Pseudomonas mendocina)).